Reading from the N-terminus, the 361-residue chain is Putative agmatine deiminase (361 aa).

The Amidino-cysteine intermediate role is filled by Cys354.

The protein belongs to the agmatine deiminase family.

It catalyses the reaction agmatine + H2O = N-carbamoylputrescine + NH4(+). In Streptococcus pneumoniae (strain ATCC 700669 / Spain 23F-1), this protein is Putative agmatine deiminase.